A 190-amino-acid polypeptide reads, in one-letter code: MKKVSPSYLKHQFLIAMPHMHDENFAQTLTYVVEHNANGAMGLVINRPQSLTLADVLEQLRPELPAPKRCQEIAIHSGGPVQTDRGFVLHPSGQTFQATVNLPGGISLSTSQDVLFSIADGYGPDQNVITLGYAGWDAGQLDAEMADNAWLTCSFDPAILFDVDSEQRLDAAARRLGINLNLISTQAGHA.

It belongs to the UPF0301 (AlgH) family.

This Pseudomonas savastanoi pv. phaseolicola (strain 1448A / Race 6) (Pseudomonas syringae pv. phaseolicola (strain 1448A / Race 6)) protein is UPF0301 protein PSPPH_0476.